A 66-amino-acid polypeptide reads, in one-letter code: MKAKFKILIPEPKSKFIRVKCRQCNNEQVIFSNATFPVRCLSCGAQIVIPKGGKAKIEGDTVRILG.

4 residues coordinate Zn(2+): Cys21, Cys24, Cys40, and Cys43. Residues 21–43 form a C4-type zinc finger; sequence CRQCNNEQVIFSNATFPVRCLSC.

The protein belongs to the eukaryotic ribosomal protein eS27 family. As to quaternary structure, part of the 30S ribosomal subunit. Requires Zn(2+) as cofactor.

The sequence is that of Small ribosomal subunit protein eS27 from Sulfolobus acidocaldarius (strain ATCC 33909 / DSM 639 / JCM 8929 / NBRC 15157 / NCIMB 11770).